A 165-amino-acid chain; its full sequence is Short form salivary protein D7R4 (165 aa).

An N-terminal signal peptide occupies residues 1–21 (MIRQVITSYFLTVCLLALVQG). 3 disulfide bridges follow: Cys-27–Cys-59, Cys-40–Cys-165, and Cys-98–Cys-117. Noradrenaline is bound by residues Glu-28 and Arg-43. Glu-28 serves as a coordination point for serotonin. Serotonin is bound by residues His-56, Tyr-115, Asp-132, and Glu-135. Positions 115, 132, and 135 each coordinate histamine. Positions 115, 132, and 135 each coordinate tryptamine. Noradrenaline contacts are provided by Asp-132 and Glu-135.

It belongs to the PBP/GOBP family. As to expression, female saliva (at protein level). Female salivary gland. Not detected in female carcass without salivary glands. Not detected in male tissues.

The protein localises to the secreted. In terms of biological role, modulates blood feeding of female mosquitoes on vertebrate species by binding and sequestering different mediators involved in the host response. Binds serotonin, noradrenaline, histamine and tryptamine. Inhibits histamine-, serotonin- and partially noradrenaline-induced smooth muscle contraction. Exhibits vasodilating activity. This chain is Short form salivary protein D7R4, found in Anopheles gambiae (African malaria mosquito).